We begin with the raw amino-acid sequence, 342 residues long: GTPase Obg (342 aa).

Residues 1–159 enclose the Obg domain; it reads MQFIDRAEIE…RNLRLELKLL (159 aa). An OBG-type G domain is found at 160–328; that stretch reads AEVGIIGLPN…LLQAIWHRLD (169 aa). Residues 166 to 173, 191 to 195, 213 to 216, 280 to 283, and 309 to 311 each bind GTP; these read GLPNAGKS, FTTLV, DIPG, NKVD, and SAV. Mg(2+) contacts are provided by S173 and T193.

This sequence belongs to the TRAFAC class OBG-HflX-like GTPase superfamily. OBG GTPase family. As to quaternary structure, monomer. It depends on Mg(2+) as a cofactor.

The protein localises to the cytoplasm. Its function is as follows. An essential GTPase which binds GTP, GDP and possibly (p)ppGpp with moderate affinity, with high nucleotide exchange rates and a fairly low GTP hydrolysis rate. Plays a role in control of the cell cycle, stress response, ribosome biogenesis and in those bacteria that undergo differentiation, in morphogenesis control. The polypeptide is GTPase Obg (Crocosphaera subtropica (strain ATCC 51142 / BH68) (Cyanothece sp. (strain ATCC 51142))).